Consider the following 150-residue polypeptide: Natriuretic peptides A (150 aa).

Positions 1–24 (MSSFTITVSFLLVLVFQFPGQTRA) are cleaved as a signal peptide. 2 propeptides span residues 25–122 (NPVY…AAPR) and 92–102 (DGGALGRGPWD). Positions 77 to 100 (LEVPPWTGEVNPAQRDGGALGRGP) are disordered. Serine 128 is modified (phosphoserine). A disulfide bond links cysteine 129 and cysteine 145.

Belongs to the natriuretic peptide family. In terms of assembly, homodimer; disulfide-linked antiparallel dimer. In terms of processing, the precursor molecule is proteolytically cleaved by CORIN at Arg-122 to produce the atrial natriuretic peptide. Undergoes further proteolytic cleavage by unknown proteases to give rise to long-acting natriuretic peptide, vessel dilator and kaliuretic peptide. Additional processing gives rise to the auriculin and atriopeptin peptides. In the kidneys, alternative processing by an unknown protease results in the peptide urodilatin. Post-translationally, cleavage by MME initiates degradation of the factor and thereby regulates its activity. Degradation by IDE results in reduced activation of NPR1 (in vitro). During IDE degradation, the resulting products can temporarily stimulate NPR2 to produce cGMP, before the fragments are completely degraded and inactivated by IDE (in vitro). Degraded by IDE. In terms of processing, phosphorylation on Ser-128 decreases vasorelaxant activity. As to expression, brain (at protein level).

It is found in the secreted. It localises to the perikaryon. The protein localises to the cell projection. Its function is as follows. Hormone that plays a key role in mediating cardio-renal homeostasis, and is involved in vascular remodeling and regulating energy metabolism. Acts by specifically binding and stimulating NPR1 to produce cGMP, which in turn activates effector proteins, such as PRKG1, that drive various biological responses. Regulates vasodilation, natriuresis, diuresis and aldosterone synthesis and is therefore essential for regulating blood pressure, controlling the extracellular fluid volume and maintaining the fluid-electrolyte balance. Also involved in inhibiting cardiac remodeling and cardiac hypertrophy by inducing cardiomyocyte apoptosis and attenuating the growth of cardiomyocytes and fibroblasts. Plays a role in female pregnancy by promoting trophoblast invasion and spiral artery remodeling in uterus, and thus prevents pregnancy-induced hypertension. In adipose tissue, acts in various cGMP- and PKG-dependent pathways to regulate lipid metabolism and energy homeostasis. This includes up-regulating lipid metabolism and mitochondrial oxygen utilization by activating the AMP-activated protein kinase (AMPK), and increasing energy expenditure by acting via MAPK11 to promote the UCP1-dependent thermogenesis of brown adipose tissue. Binds the clearance receptor NPR3 which removes the hormone from circulation. In terms of biological role, may have a role in cardio-renal homeostasis through regulation of natriuresis, diuresis, vasodilation, and inhibiting aldosterone synthesis. In vitro, promotes the production of cGMP and induces vasodilation. May promote natriuresis, at least in part, by enhancing prostaglandin E2 synthesis resulting in the inhibition of renal Na+-K+-ATPase. However reports on the involvement of this peptide in mammal blood volume and blood pressure homeostasis are conflicting; according to a report, in vivo it is not sufficient to activate cGMP and does not inhibit collecting duct transport nor effect diuresis and natriuresis. Appears to bind to specific receptors that are distinct from the receptors bound by atrial natriuretic peptide and vessel dilator. Possibly enhances protein excretion in urine by decreasing proximal tubular protein reabsorption. Functionally, may have a role in cardio-renal homeostasis through regulation of natriuresis, diuresis, and vasodilation. In vitro, promotes the production of cGMP and induces vasodilation. May promote natriuresis, at least in part, by enhancing prostaglandin E2 synthesis resulting in the inhibition of renal Na+-K+-ATPase. However reports on the involvement of this peptide in mammal blood volume and blood pressure homeostasis are conflicting; according to a report it is not sufficient to activate cGMP and does not inhibit collecting duct transport nor effect diuresis and natriuresis. Appears to bind to specific receptors that are distinct from the receptors bound by the atrial natriuretic and long-acting natriuretic peptides. Possibly functions in protein excretion in urine by maintaining the integrity of the proximal tubules and enhancing protein excretion by decreasing proximal tubular protein reabsorption. May have a role in cardio-renal homeostasis through regulation of diuresis and inhibiting aldosterone synthesis. In vitro, promotes the production of cGMP and induces vasodilation. May promote natriuresis, at least in part, by enhancing prostaglandin E2 synthesis resulting in the inhibition of renal Na+-K+-ATPase. May have a role in potassium excretion but not sodium excretion (natriuresis). Possibly enhances protein excretion in urine by decreasing proximal tubular protein reabsorption. Its function is as follows. Hormone produced in the kidneys that appears to be important for maintaining cardio-renal homeostasis. Mediates vasodilation, natriuresis and diuresis primarily in the renal system, in order to maintain the extracellular fluid volume and control the fluid-electrolyte balance. Specifically binds and stimulates cGMP production by renal transmembrane receptors, likely NPR1. Urodilatin not ANP, may be the natriuretic peptide responsible for the regulation of sodium and water homeostasis in the kidney. In terms of biological role, may have a role in cardio-renal homeostasis through regulation of natriuresis and vasodilation. In vivo promotes natriuresis and in vitro, vasodilates renal artery strips. Functionally, may have a role in cardio-renal homeostasis through regulation of regulation of natriuresis and vasodilation. In vivo promotes natriuresis. In vitro, vasodilates intestinal smooth muscle but not smooth muscle strips. May have a role in cardio-renal homeostasis through regulation of natriuresis and vasodilation. In vivo promotes natriuresis. In vitro, selectively vasodilates intestinal and vascular smooth muscle strips. Its function is as follows. May have a role in cardio-renal homeostasis through regulation of natriuresis and vasodilation. In vivo promotes natriuresis. In vitro, selectively vasodilates intestinal smooth muscle but not vascular smooth muscle strips. The polypeptide is Natriuretic peptides A (NPPA) (Sus scrofa (Pig)).